The following is a 678-amino-acid chain: Methionine--tRNA ligase (678 aa).

The 'HIGH' region signature appears at 14-24 (PYANGSIHLGH). Zn(2+)-binding residues include Cys-145, Cys-148, Cys-158, and Cys-161. The short motif at 331–335 (KMSKS) is the 'KMSKS' region element. Lys-334 is a binding site for ATP. Positions 576-678 (AFAAVDLRIA…SGAKPGQRVK (103 aa)) constitute a tRNA-binding domain.

The protein belongs to the class-I aminoacyl-tRNA synthetase family. MetG type 1 subfamily. As to quaternary structure, homodimer. The cofactor is Zn(2+).

It is found in the cytoplasm. The enzyme catalyses tRNA(Met) + L-methionine + ATP = L-methionyl-tRNA(Met) + AMP + diphosphate. In terms of biological role, is required not only for elongation of protein synthesis but also for the initiation of all mRNA translation through initiator tRNA(fMet) aminoacylation. In Pseudomonas aeruginosa (strain UCBPP-PA14), this protein is Methionine--tRNA ligase.